Here is a 214-residue protein sequence, read N- to C-terminus: MDFNQVKVINHPLIQHKLTIMRKKETSTVKFRTLMHEVSMLLAYEVTRDLEIEYEEIETPLATMQSPVLKGKKLVFVSILRAGNGLLDGMLQLVPTARIGHIGLYRDPKTLEAVEYYFKLPEHTQDRDVIVVDPMLATGNSAIAAVKEVKALHPKSIKFLCLLASPEGISNFHGEHPDVPIFTAAIDEQLNDHGYIVPGLGDAGDRLYGTKLAH.

Residues arginine 81, arginine 106, and 133–141 (DPMLATGNS) contribute to the 5-phospho-alpha-D-ribose 1-diphosphate site. Uracil is bound by residues isoleucine 196 and 201-203 (GDA). Aspartate 202 serves as a coordination point for 5-phospho-alpha-D-ribose 1-diphosphate.

The protein belongs to the UPRTase family. Requires Mg(2+) as cofactor.

The enzyme catalyses UMP + diphosphate = 5-phospho-alpha-D-ribose 1-diphosphate + uracil. The protein operates within pyrimidine metabolism; UMP biosynthesis via salvage pathway; UMP from uracil: step 1/1. Its activity is regulated as follows. Allosterically activated by GTP. Its function is as follows. Catalyzes the conversion of uracil and 5-phospho-alpha-D-ribose 1-diphosphate (PRPP) to UMP and diphosphate. In Legionella pneumophila subsp. pneumophila (strain Philadelphia 1 / ATCC 33152 / DSM 7513), this protein is Uracil phosphoribosyltransferase.